We begin with the raw amino-acid sequence, 285 residues long: Bifunctional protein FolD (285 aa).

NADP(+)-binding positions include 166–168 (GAS) and Ile-232.

The protein belongs to the tetrahydrofolate dehydrogenase/cyclohydrolase family. In terms of assembly, homodimer.

The catalysed reaction is (6R)-5,10-methylene-5,6,7,8-tetrahydrofolate + NADP(+) = (6R)-5,10-methenyltetrahydrofolate + NADPH. The enzyme catalyses (6R)-5,10-methenyltetrahydrofolate + H2O = (6R)-10-formyltetrahydrofolate + H(+). It functions in the pathway one-carbon metabolism; tetrahydrofolate interconversion. Functionally, catalyzes the oxidation of 5,10-methylenetetrahydrofolate to 5,10-methenyltetrahydrofolate and then the hydrolysis of 5,10-methenyltetrahydrofolate to 10-formyltetrahydrofolate. In Photobacterium profundum (strain SS9), this protein is Bifunctional protein FolD.